Consider the following 156-residue polypeptide: Protein GLUTAMINE DUMPER 4 (156 aa).

Over 1 to 39 (MRPLSIKPTSLDVARHATSVESFGNHRPPISPWHSPVPY) the chain is Extracellular. The chain crosses the membrane as a helical span at residues 40–60 (LFGGLAAMLGLIAFALLILAC). The Cytoplasmic segment spans residues 61 to 156 (SYWRLSTSGD…AKENEETTSQ (96 aa)). The tract at residues 67 to 87 (TSGDDSGERVDEEKESRSGVK) is disordered. The span at 72–84 (SGERVDEEKESRS) shows a compositional bias: basic and acidic residues. Positions 99 to 103 (VIMAG) match the VIMAG motif. Residues 136-156 (AGEEKMGDREKAKENEETTSQ) form a disordered region.

This sequence belongs to the GLUTAMINE DUMPER 1 (TC 9.B.60) family. As to expression, expressed in the vascular tissues, even in the minor veins of the leaves.

The protein resides in the membrane. In terms of biological role, probable subunit of an amino acid transporter involved in the regulation of the amino acid metabolism. Stimulates amino acid export by activating nonselective amino acid facilitators. This is Protein GLUTAMINE DUMPER 4 (GDU4) from Arabidopsis thaliana (Mouse-ear cress).